The sequence spans 230 residues: MYIKMEVEFDEDTGALQIGGQEVFVMVFEPGQEVFDKSLDQHHQFPGVATSVVFPQLSIGTKVDVFTSSGGFGATDHHCFNYHVCNKRFVFGSVPALEIPADVREHLRIGAPITCADRLVSLVTAVHAADGAWLLRVTAARAGQVSGHARQQRRGAGRTVRAGRSVYGPVQLPYEQLKAHAFRKRRPRRDAAESCALFYNDSEVRITFNKGEFELMHWRLPGPLVSHGFK.

Histidine 43 acts as the Proton donor in catalysis. The active-site Shared with catalytic histidine of dimeric partner is the tyrosine 174. The active-site Proton acceptor; shared with catalytic histidine of dimeric partner is the lysine 178.

It belongs to the poxin family. As to quaternary structure, homodimer.

The enzyme catalyses 2',3'-cGAMP + H2O = Gp(2'-5')Ap(3') + H(+). Nuclease that cleaves host 2',3'-cGAMP. The protein is Poxin (P26) of Orgyia pseudotsugata multicapsid polyhedrosis virus (OpMNPV).